We begin with the raw amino-acid sequence, 301 residues long: Glycine--tRNA ligase alpha subunit (301 aa).

This sequence belongs to the class-II aminoacyl-tRNA synthetase family. In terms of assembly, tetramer of two alpha and two beta subunits.

It is found in the cytoplasm. It carries out the reaction tRNA(Gly) + glycine + ATP = glycyl-tRNA(Gly) + AMP + diphosphate. In Polaromonas sp. (strain JS666 / ATCC BAA-500), this protein is Glycine--tRNA ligase alpha subunit.